Consider the following 616-residue polypeptide: Dihydroxy-acid dehydratase (616 aa).

Residue D81 participates in Mg(2+) binding. C122 serves as a coordination point for [2Fe-2S] cluster. Residues D123 and K124 each coordinate Mg(2+). K124 is subject to N6-carboxylysine. C195 lines the [2Fe-2S] cluster pocket. E491 contributes to the Mg(2+) binding site. Residue S517 is the Proton acceptor of the active site.

It belongs to the IlvD/Edd family. Homodimer. Requires [2Fe-2S] cluster as cofactor. Mg(2+) is required as a cofactor.

It catalyses the reaction (2R)-2,3-dihydroxy-3-methylbutanoate = 3-methyl-2-oxobutanoate + H2O. The catalysed reaction is (2R,3R)-2,3-dihydroxy-3-methylpentanoate = (S)-3-methyl-2-oxopentanoate + H2O. Its pathway is amino-acid biosynthesis; L-isoleucine biosynthesis; L-isoleucine from 2-oxobutanoate: step 3/4. It participates in amino-acid biosynthesis; L-valine biosynthesis; L-valine from pyruvate: step 3/4. Its function is as follows. Functions in the biosynthesis of branched-chain amino acids. Catalyzes the dehydration of (2R,3R)-2,3-dihydroxy-3-methylpentanoate (2,3-dihydroxy-3-methylvalerate) into 2-oxo-3-methylpentanoate (2-oxo-3-methylvalerate) and of (2R)-2,3-dihydroxy-3-methylbutanoate (2,3-dihydroxyisovalerate) into 2-oxo-3-methylbutanoate (2-oxoisovalerate), the penultimate precursor to L-isoleucine and L-valine, respectively. The polypeptide is Dihydroxy-acid dehydratase (Escherichia coli O1:K1 / APEC).